Consider the following 239-residue polypeptide: UDP-2,3-diacylglucosamine hydrolase (239 aa).

Mn(2+) contacts are provided by Asp8, His10, Asp41, Asn78, and His113. Substrate is bound at residue 78–79 (NR). Substrate contacts are provided by Asp121, Ser159, Asn163, Lys166, and His194. His194 and His196 together coordinate Mn(2+).

It belongs to the LpxH family. It depends on Mn(2+) as a cofactor.

It is found in the cell inner membrane. It catalyses the reaction UDP-2-N,3-O-bis[(3R)-3-hydroxytetradecanoyl]-alpha-D-glucosamine + H2O = 2-N,3-O-bis[(3R)-3-hydroxytetradecanoyl]-alpha-D-glucosaminyl 1-phosphate + UMP + 2 H(+). The protein operates within glycolipid biosynthesis; lipid IV(A) biosynthesis; lipid IV(A) from (3R)-3-hydroxytetradecanoyl-[acyl-carrier-protein] and UDP-N-acetyl-alpha-D-glucosamine: step 4/6. Functionally, hydrolyzes the pyrophosphate bond of UDP-2,3-diacylglucosamine to yield 2,3-diacylglucosamine 1-phosphate (lipid X) and UMP by catalyzing the attack of water at the alpha-P atom. Involved in the biosynthesis of lipid A, a phosphorylated glycolipid that anchors the lipopolysaccharide to the outer membrane of the cell. This Shewanella sp. (strain MR-7) protein is UDP-2,3-diacylglucosamine hydrolase.